Reading from the N-terminus, the 281-residue chain is Shikimate dehydrogenase (NADP(+)) (281 aa).

Residues 19 to 21 (SFS) and threonine 66 each bind shikimate. Catalysis depends on lysine 70, which acts as the Proton acceptor. Shikimate is bound by residues asparagine 91 and aspartate 104. NADP(+) contacts are provided by residues 127-131 (GAGGA) and isoleucine 223. Residue tyrosine 225 coordinates shikimate. An NADP(+)-binding site is contributed by glycine 246.

Belongs to the shikimate dehydrogenase family. Homodimer.

It catalyses the reaction shikimate + NADP(+) = 3-dehydroshikimate + NADPH + H(+). It functions in the pathway metabolic intermediate biosynthesis; chorismate biosynthesis; chorismate from D-erythrose 4-phosphate and phosphoenolpyruvate: step 4/7. Involved in the biosynthesis of the chorismate, which leads to the biosynthesis of aromatic amino acids. Catalyzes the reversible NADPH linked reduction of 3-dehydroshikimate (DHSA) to yield shikimate (SA). The chain is Shikimate dehydrogenase (NADP(+)) from Methanobrevibacter smithii (strain ATCC 35061 / DSM 861 / OCM 144 / PS).